The following is a 183-amino-acid chain: MTAPKATILSSDEIRRALTRIAHEIIERNKGAENLAIIGVHTRGIPLAERLASKLSELEGVEVPRGMLDITLYRDDLSEVARQPIIRETQVPFDLADRRVILVDDVLYTGRTVRAALDALIDLGRPEGIQLAVLVDRGHRELPIRADYVGKNLPTAKHEVVKVKLQETDGTDIVELFDPEDLQ.

Residues threonine 42 to arginine 43, arginine 87, aspartate 104 to threonine 112, arginine 137, and valine 161 contribute to the substrate site. The PRPP-binding signature appears at valine 100 to threonine 112.

The protein belongs to the purine/pyrimidine phosphoribosyltransferase family. PyrR subfamily.

The enzyme catalyses UMP + diphosphate = 5-phospho-alpha-D-ribose 1-diphosphate + uracil. Regulates the transcription of the pyrimidine nucleotide (pyr) operon in response to exogenous pyrimidines. In terms of biological role, also displays a weak uracil phosphoribosyltransferase activity which is not physiologically significant. The sequence is that of Bifunctional protein PyrR from Deinococcus radiodurans (strain ATCC 13939 / DSM 20539 / JCM 16871 / CCUG 27074 / LMG 4051 / NBRC 15346 / NCIMB 9279 / VKM B-1422 / R1).